The sequence spans 41 residues: Photosystem II reaction center protein L (41 aa).

A helical membrane pass occupies residues 20–40 (SLYLGLLLVFVVGLLFSSYFL).

This sequence belongs to the PsbL family. In terms of assembly, PSII is composed of 1 copy each of membrane proteins PsbA, PsbB, PsbC, PsbD, PsbE, PsbF, PsbH, PsbI, PsbJ, PsbK, PsbL, PsbM, PsbT, PsbX, PsbY, PsbZ, Psb30/Ycf12, peripheral proteins PsbO, CyanoQ (PsbQ), PsbU, PsbV and a large number of cofactors. It forms dimeric complexes.

The protein resides in the cellular thylakoid membrane. In terms of biological role, one of the components of the core complex of photosystem II (PSII). PSII is a light-driven water:plastoquinone oxidoreductase that uses light energy to abstract electrons from H(2)O, generating O(2) and a proton gradient subsequently used for ATP formation. It consists of a core antenna complex that captures photons, and an electron transfer chain that converts photonic excitation into a charge separation. This subunit is found at the monomer-monomer interface and is required for correct PSII assembly and/or dimerization. The sequence is that of Photosystem II reaction center protein L from Synechococcus sp. (strain JA-2-3B'a(2-13)) (Cyanobacteria bacterium Yellowstone B-Prime).